A 309-amino-acid chain; its full sequence is Carbamate kinase (309 aa).

This sequence belongs to the carbamate kinase family.

Its subcellular location is the cytoplasm. The enzyme catalyses hydrogencarbonate + NH4(+) + ATP = carbamoyl phosphate + ADP + H2O + H(+). The protein operates within metabolic intermediate metabolism; carbamoyl phosphate degradation; CO(2) and NH(3) from carbamoyl phosphate: step 1/1. The sequence is that of Carbamate kinase (arcC) from Staphylococcus haemolyticus (strain JCSC1435).